Reading from the N-terminus, the 196-residue chain is Rho-related protein racA (196 aa).

Ala-13, Gly-15, Lys-16, Thr-17, Cys-18, Tyr-32, Thr-35, Gly-60, Lys-116, Asp-118, and Ala-159 together coordinate GTP. Thr-17 contributes to the Mg(2+) binding site. 2 short sequence motifs (switch) span residues 26–37 and 57–75; these read NAFPNEYIPTVF and DTAG…YPQT. Thr-35 is a binding site for Mg(2+). Cys-193 is modified (cysteine methyl ester). The S-geranylgeranyl cysteine moiety is linked to residue Cys-193. The propeptide at 194–196 is removed in mature form; that stretch reads LLF.

Belongs to the small GTPase superfamily. Rho family. As to quaternary structure, interacts (GTP-bound form) with PAK2 (via CRIB domain). The cofactor is Mg(2+).

It localises to the cell membrane. Its subcellular location is the cytoplasm. The protein resides in the cytoskeleton. The enzyme catalyses GTP + H2O = GDP + phosphate + H(+). Regulated by guanine nucleotide exchange factors (GEFs) which promote the exchange of bound GDP for free GTP, GTPase activating proteins (GAPs) which increase the GTP hydrolysis activity, and GDP dissociation inhibitors which inhibit the dissociation of the nucleotide from the GTPase. Small GTPase which cycles between active GTP-bound and inactive GDP-bound states. Involved in cytoskeleton remodeling. Plays a role in phagocytosis of bacteria and host erythrocytes. Involved in capping of surface receptors. May be involved in cytokinesis. This Entamoeba histolytica (strain ATCC 30459 / HM-1:IMSS / ABRM) protein is Rho-related protein racA.